We begin with the raw amino-acid sequence, 501 residues long: Aldehyde dehydrogenase, cytosolic 1 (501 aa).

Serine 2 carries the post-translational modification N-acetylserine. An N6-acetyllysine mark is found at lysine 91 and lysine 128. 246–251 provides a ligand contact to NAD(+); it reads GSTEVG. Lysine 252 is subject to N6-acetyllysine. Residue glutamate 269 is the Proton acceptor of the active site. Cysteine 303 (nucleophile) is an active-site residue. Lysine 353, lysine 367, and lysine 410 each carry N6-acetyllysine. Phosphoserine is present on serine 413. An N6-acetyllysine mark is found at lysine 419, lysine 435, and lysine 495.

The protein belongs to the aldehyde dehydrogenase family. As to quaternary structure, homotetramer. As to expression, very low levels in lung and liver.

The protein localises to the cytoplasm. It catalyses the reaction an aldehyde + NAD(+) + H2O = a carboxylate + NADH + 2 H(+). Its pathway is alcohol metabolism; ethanol degradation; acetate from ethanol: step 2/2. Its function is as follows. Can oxidize benzaldehyde, propionaldehyde and acetaldehyde. No detectable activity with retinal. This is Aldehyde dehydrogenase, cytosolic 1 (Aldh1a7) from Rattus norvegicus (Rat).